Reading from the N-terminus, the 628-residue chain is MAGGAITPDSLIGLIAEINEIPGNFGLFKKDCSDLARRVGLLTHLIEEIRDSSPPSESDASSSLNSHECDWWSDLVVGLQAAKRLLSSATSFQARESSDGAAKRISFQFQCVTWKLEKALGDLTYDRYDISDEVREQVELARLQLRRAMQRYGSLNSKKFSSGLSEPMEKDASSNRKVIEKLESIPETVHSLSDEKKFESPPPWKSSSVSLAFFLSKDGDDERLEKAVTENSDDSQKSDNLTIPEDFLCPISLELMKDPAIVSTGQTYERSFIQRWIDCGNLSCPKTQQKLENFTLTPNYVLRSLISQWCTKHNIEQPGGYMNGRTKNSDGSFRDLSGDMSAIRALVCKLSSQSIEDRRTAVSEIRSLSKRSTDNRILIAEAGAIPVLVKLLTSDGDTETQENAVTCILNLSIYEHNKELIMLAGAVTSIVLVLRAGSMEARENAAATLFSLSLADENKIIIGASGAIMALVDLLQYGSVRGKKDAATALFNLCIYQGNKGRAVRAGIVKPLVKMLTDSSSERMADEALTILSVLASNQVAKTAILRANAIPPLIDCLQKDQPRNRENAAAILLCLCKRDTEKLISIGRLGAVVPLMELSRDGTERAKRKANSLLELLRKSSRKLGSL.

The U-box domain maps to 242–316; that stretch reads TIPEDFLCPI…SQWCTKHNIE (75 aa). ARM repeat units follow at residues 373–413, 415–454, 456–495, 497–537, and 539–578; these read TDNR…NLSI, EHNKELIMLAGAVTSIVLVLRAGSMEARENAAATLFSLSL, DENKIIIGASGAIMALVDLLQYGSVRGKKDAATALFNLCI, QGNK…VLAS, and QVAKTAILRANAIPPLIDCLQKDQPRNRENAAAILLCLCK.

The catalysed reaction is S-ubiquitinyl-[E2 ubiquitin-conjugating enzyme]-L-cysteine + [acceptor protein]-L-lysine = [E2 ubiquitin-conjugating enzyme]-L-cysteine + N(6)-ubiquitinyl-[acceptor protein]-L-lysine.. It participates in protein modification; protein ubiquitination. Functions as an E3 ubiquitin ligase. The polypeptide is U-box domain-containing protein 10 (PUB10) (Arabidopsis thaliana (Mouse-ear cress)).